We begin with the raw amino-acid sequence, 467 residues long: Probable amino acid permease 7 (467 aa).

At 1–29 (MDIKEDDESRVITPTELQLHDSVTARTGT) the chain is on the cytoplasmic side. The chain crosses the membrane as a helical span at residues 30-50 (LWTAVAHIITGVIGAGVLSLA). The Extracellular segment spans residues 51–58 (WATAELGW). The helical transmembrane segment at 59-79 (IAGPAALIAFAGVTLLSAFLL) threads the bilayer. Topologically, residues 80-111 (SDCYRFPDPNNGPLRLNSYSQAVKLYLGKKNE) are cytoplasmic. The helical transmembrane segment at 112–132 (IVCGVVVYISLFGCGIAYTIV) threads the bilayer. At 133–163 (IATCSRAIMKSNCYHRNGHNATCSYGDNNNY) the chain is on the extracellular side. 2 consecutive transmembrane segments (helical) span residues 164–184 (FMVL…FHNM) and 185–205 (VWLS…GIGL). Residues 206-231 (ALGKIIENRKIEGSIRGIPAENRGEK) lie on the Extracellular side of the membrane. Residues 232-252 (VWIVFQALGNIAFSYPFSIIL) form a helical membrane-spanning segment. The Cytoplasmic segment spans residues 253 to 274 (LEIQDTLRSPPAEKQTMKKAST). The helical transmembrane segment at 275–295 (VAVFIQTFFFFCCGCFGYAAF) threads the bilayer. Topologically, residues 296 to 312 (GDSTPGNLLTGFGFYEP) are extracellular. The chain crosses the membrane as a helical span at residues 313 to 333 (FWLVDFANACIVLHLVGGYQV). At 334–383 (YSQPIFAAAERSLTKKYPENKFIARFYGFKLPLLRGETVRLNPMRMCLRT) the chain is on the cytoplasmic side. 2 helical membrane-spanning segments follow: residues 384–404 (MYVL…EVLG) and 405–425 (VVGA…MCIL). Topologically, residues 426–443 (QKKIRSWTRPWLLLRGFS) are cytoplasmic. The chain crosses the membrane as a helical span at residues 444–464 (FVCLLVCLLSLVGSIYGLVGA). The Extracellular portion of the chain corresponds to 465 to 467 (KFG).

This sequence belongs to the amino acid/polyamine transporter 2 family. Amino acid/auxin permease (AAAP) (TC 2.A.18.2) subfamily.

It localises to the cell membrane. In terms of biological role, amino acid-proton symporter. Stereospecific transporter with a broad specificity for neutral amino acids. In Arabidopsis thaliana (Mouse-ear cress), this protein is Probable amino acid permease 7 (AAP7).